Here is an 841-residue protein sequence, read N- to C-terminus: 27S pre-rRNA (guanosine(2922)-2'-O)-methyltransferase (841 aa).

S-adenosyl-L-methionine contacts are provided by G58, W60, D78, D94, and D119. The active-site Proton acceptor is the K159. Residues Q360–M389 are a coiled coil. Phosphoserine occurs at positions 455 and 464. Disordered stretches follow at residues R480–A534 and N565–D654. Basic and acidic residues predominate over residues S505–I517. Residues E518–A534 show a composition bias toward acidic residues. At S529 the chain carries Phosphoserine. Polar residues predominate over residues N574–S585. Over residues H598 to E607 the composition is skewed to basic and acidic residues. Composition is skewed to acidic residues over residues A608 to F621 and A629 to E641. Residues E642 to D654 are compositionally biased toward basic and acidic residues.

It belongs to the class I-like SAM-binding methyltransferase superfamily. RNA methyltransferase RlmE family. SPB1 subfamily. Component of the nucleolar and nucleoplasmic pre-60S ribosomal particle. Interacts with the snoRNA-associated proteins NOP1 and NOP58.

It is found in the nucleus. Its subcellular location is the nucleolus. The enzyme catalyses guanosine(2922) in 27S pre-rRNA + S-adenosyl-L-methionine = 2'-O-methylguanosine(2922) in 27S pre-rRNA + S-adenosyl-L-homocysteine + H(+). In terms of biological role, required for proper assembly of pre-ribosomal particles during the biogenesis of the 60S ribosomal subunit. Specifically methylates the guanosine in position 2922 of the 25S rRNA at the stage of 27S pre-rRNA maturation. Also methylates the uridine in position 2921 in the absence of methylation of this residue guided by snoRNA snR52 at the stage of 35S pre-rRNA maturation. In Saccharomyces cerevisiae (strain ATCC 204508 / S288c) (Baker's yeast), this protein is 27S pre-rRNA (guanosine(2922)-2'-O)-methyltransferase.